Reading from the N-terminus, the 46-residue chain is Diuretic hormone (46 aa).

Ile-46 carries the isoleucine amide modification.

The protein belongs to the sauvagine/corticotropin-releasing factor/urotensin I family.

It is found in the secreted. Regulation of fluid secretion. Stimulates primary urine secretion by Malpighian tubules and causes a dose-dependent stimulation of cAMP levels in the tubules. The sequence is that of Diuretic hormone from Periplaneta americana (American cockroach).